A 376-amino-acid chain; its full sequence is MRLFVSRRVKRWKIFHFFVTCFILSFMVFWSPINNYIMSHMKSYSYRYLVNSYGFVNNSLSLKHSSVQPHYPYLINHREKCQAQDVLLLLFIKTAPENYGRRSAIRKTWGNENYVQSQLNANIKILFALGTPGPLKGKELQKRLIGEDQVYKDIIQQDFIDSFHNLTSKFLLQFSWANTFCPHAKFLMTADDDIFIHMPNLIEYLQGLEQIGVRDFWIGHVHRGGPPVRDKSSKYYVPYEMYKWPAYPDYTAGAAYVVSRDVAAKIYEASQTLNSSMYIDDVFMGLCANKVGILPQDHVFFSGEGKIPYHPCIYEKMMTSHGHLQDLQDLWIEATHPKVKNISKGFFGQIYCRLIKIVLLCRLTYRNSYPCWAAFA.

Topologically, residues 1 to 13 (MRLFVSRRVKRWK) are cytoplasmic. A helical; Signal-anchor for type II membrane protein membrane pass occupies residues 14-34 (IFHFFVTCFILSFMVFWSPIN). The Lumenal portion of the chain corresponds to 35 to 376 (NYIMSHMKSY…NSYPCWAAFA (342 aa)). The N-linked (GlcNAc...) asparagine glycan is linked to Asn57.

This sequence belongs to the glycosyltransferase 31 family. Highly expressed in adult spleen, placenta and cerebellar Purkinje cells where it colocalizes with HNK-1. Expressed at lower level in brain, lung, thymus and muscle.

It is found in the golgi apparatus membrane. It carries out the reaction a beta-D-Gal-(1-&gt;4)-beta-D-Glc-(1&lt;-&gt;1)-Cer(d18:1(4E)) + UDP-N-acetyl-alpha-D-glucosamine = a beta-D-GlcNAc-(1-&gt;3)-beta-D-Gal-(1-&gt;4)-beta-D-Glc-(1&lt;-&gt;1)-Cer(d18:1(4E)) + UDP + H(+). The catalysed reaction is a neolactoside nLc4Cer(d18:1(4E)) + UDP-N-acetyl-alpha-D-glucosamine = a neolactoside IV(3)-beta-GlcNAc-nLc4Cer(d18:1(4E)) + UDP + H(+). Its pathway is protein modification; protein glycosylation. In terms of biological role, beta-1,3-N-acetylglucosaminyltransferase that plays a key role in the synthesis of lacto- or neolacto-series carbohydrate chains on glycolipids, notably by participating in biosynthesis of HNK-1 and Lewis X carbohydrate structures. Has strong activity toward lactosylceramide (LacCer) and neolactotetraosylceramide (nLc(4)Cer; paragloboside), resulting in the synthesis of Lc(3)Cer and neolactopentaosylceramide (nLc(5)Cer), respectively. Plays a central role in regulating neolacto-series glycolipid synthesis during embryonic development. This Mus musculus (Mouse) protein is Lactosylceramide 1,3-N-acetyl-beta-D-glucosaminyltransferase.